We begin with the raw amino-acid sequence, 298 residues long: Protoheme IX farnesyltransferase (298 aa).

Helical transmembrane passes span 23–43, 49–69, 95–115, 117–137, 144–164, 171–191, 234–254, and 276–296; these read VTQL…PGLP, LFGT…NCLI, VLSL…HLVN, LTMW…TVIL, NIVI…ASVA, AWVL…ALAL, FMHM…GIFV, and SILY…VGVL.

It belongs to the UbiA prenyltransferase family. Protoheme IX farnesyltransferase subfamily.

It is found in the cell inner membrane. It catalyses the reaction heme b + (2E,6E)-farnesyl diphosphate + H2O = Fe(II)-heme o + diphosphate. It functions in the pathway porphyrin-containing compound metabolism; heme O biosynthesis; heme O from protoheme: step 1/1. Functionally, converts heme B (protoheme IX) to heme O by substitution of the vinyl group on carbon 2 of heme B porphyrin ring with a hydroxyethyl farnesyl side group. In Bordetella avium (strain 197N), this protein is Protoheme IX farnesyltransferase.